The following is an 827-amino-acid chain: Leucine--tRNA ligase (827 aa).

The 'HIGH' region signature appears at proline 42–histidine 52. A 'KMSKS' region motif is present at residues lysine 581 to serine 585. Lysine 584 is a binding site for ATP.

Belongs to the class-I aminoacyl-tRNA synthetase family.

Its subcellular location is the cytoplasm. It carries out the reaction tRNA(Leu) + L-leucine + ATP = L-leucyl-tRNA(Leu) + AMP + diphosphate. In Desulforamulus reducens (strain ATCC BAA-1160 / DSM 100696 / MI-1) (Desulfotomaculum reducens), this protein is Leucine--tRNA ligase.